Here is a 352-residue protein sequence, read N- to C-terminus: Protein-glutamate methylesterase/protein-glutamine glutaminase 2 (352 aa).

In terms of domain architecture, Response regulatory spans 6–124 (KVLIVEDSLV…NAGYDTMAAK (119 aa)). The residue at position 57 (D57) is a 4-aspartylphosphate. A CheB-type methylesterase domain is found at 162–343 (PGTYSMVGIV…LPLPAIAARL (182 aa)). Catalysis depends on residues S173, H200, and D292.

Belongs to the CheB family. Post-translationally, phosphorylated by CheA. Phosphorylation of the N-terminal regulatory domain activates the methylesterase activity.

The protein localises to the cytoplasm. It carries out the reaction [protein]-L-glutamate 5-O-methyl ester + H2O = L-glutamyl-[protein] + methanol + H(+). The catalysed reaction is L-glutaminyl-[protein] + H2O = L-glutamyl-[protein] + NH4(+). Its function is as follows. Involved in chemotaxis. Part of a chemotaxis signal transduction system that modulates chemotaxis in response to various stimuli. Catalyzes the demethylation of specific methylglutamate residues introduced into the chemoreceptors (methyl-accepting chemotaxis proteins or MCP) by CheR. Also mediates the irreversible deamidation of specific glutamine residues to glutamic acid. In Paramagnetospirillum magneticum (strain ATCC 700264 / AMB-1) (Magnetospirillum magneticum), this protein is Protein-glutamate methylesterase/protein-glutamine glutaminase 2.